The chain runs to 570 residues: Periplasmic trehalase (570 aa).

A signal peptide spans 1–34 (MIPPEIRRSVLLQKAIKLALAGTLLTFASFSATA). Substrate-binding positions include Arg159, 166–167 (WD), Asn203, 212–214 (RSQ), 284–286 (RPE), and Gly317. Catalysis depends on proton donor/acceptor residues Asp319 and Glu503. Glu518 lines the substrate pocket. Residues 544-570 (KPCDSVPSTRPASLSATPTKTPSAATQ) form a disordered region. The span at 554–570 (PASLSATPTKTPSAATQ) shows a compositional bias: low complexity.

The protein belongs to the glycosyl hydrolase 37 family. Monomer.

It localises to the periplasm. It carries out the reaction alpha,alpha-trehalose + H2O = alpha-D-glucose + beta-D-glucose. In terms of biological role, provides the cells with the ability to utilize trehalose at high osmolarity by splitting it into glucose molecules that can subsequently be taken up by the phosphotransferase-mediated uptake system. The chain is Periplasmic trehalase from Salmonella choleraesuis (strain SC-B67).